Reading from the N-terminus, the 371-residue chain is Protein maelstrom 1 (371 aa).

A DNA-binding region (HMG box) is located at residues 2–68 (AQNKPNAFMA…VLERESKTER (67 aa)).

The protein belongs to the maelstrom family.

The protein localises to the cytoplasm. It localises to the nucleus. Its function is as follows. Involved both in the piRNA and miRNA metabolic processes. As a component of the meiotic nuage, plays a central role during oogenesis by repressing transposable elements and preventing their mobilization, which is essential for the germline integrity. Repression of transposable elements is mediated via the piRNA metabolic process, which mediates the repression of transposable elements during meiosis by forming complexes composed of piRNAs and Piwi proteins and governs the repression of transposons. As a nuclear component, it is required for proper differentiation in the germline stem cell (GSC) lineage by repressing microRNA-7 (miR-7), thereby acting as an indirect regulator of bag-of-marbles (Bam). Acts by binding to the promoter of miR-7 gene and repressing its expression; miR-7 repression alleviates the Bam repression by miR-7, thereby allowing differentiation in the germline stem cell (GSC) lineage. This is Protein maelstrom 1 (mael1) from Drosophila pseudoobscura pseudoobscura (Fruit fly).